Reading from the N-terminus, the 493-residue chain is Telomere-binding protein subunit alpha (493 aa).

The tract at residues 1-30 (MSSAKRSTSRVSKKKAAPAKDGAPKKREQS) is disordered. Residues 7-17 (STSRVSKKKAA) show a composition bias toward basic residues.

This sequence belongs to the telombin family. As to quaternary structure, heterodimer of an alpha and a beta subunit.

The protein localises to the nucleus. The protein resides in the chromosome. Its subcellular location is the telomere. May function as protective capping of the single-stranded telomeric overhang. May also participate in telomere length regulation during DNA replication. The protein is Telomere-binding protein subunit alpha (STY56V) of Stylonychia mytilus (Ciliate).